A 372-amino-acid chain; its full sequence is Serine proteinase inhibitor 1 (372 aa).

Belongs to the serpin family. Poxviruses subfamily.

Its subcellular location is the host cytoplasm. Its function is as follows. Plays a role in mediating viral host range. May act to inhibit a caspase independent form of apoptosis to allow efficient virus replication in infected cells. The sequence is that of Serine proteinase inhibitor 1 (OPG208) from Homo sapiens (Human).